The sequence spans 162 residues: UPF0114 protein Shewmr4_0646 (162 aa).

4 consecutive transmembrane segments (helical) span residues 15-35 (IMAPIYLGLSLVLLGLGIKFF), 53-73 (LVLVTLSLIDITLVGGLIVMV), 108-128 (KVAASIVAISSIHLLKIFMDV), and 136-156 (IMWYLLIHITFVVSAFAMGYL).

This sequence belongs to the UPF0114 family.

It localises to the cell membrane. The polypeptide is UPF0114 protein Shewmr4_0646 (Shewanella sp. (strain MR-4)).